We begin with the raw amino-acid sequence, 310 residues long: ADP-L-glycero-D-manno-heptose-6-epimerase (310 aa).

Residues 10–11 (FI), 31–32 (DN), K38, K53, 75–79 (EGACS), and N92 contribute to the NADP(+) site. Y140 (proton acceptor) is an active-site residue. K144 contributes to the NADP(+) binding site. N169 provides a ligand contact to substrate. NADP(+) is bound by residues V170 and K178. K178 (proton acceptor) is an active-site residue. Substrate-binding positions include S180, H187, 201–204 (FEGS), R209, and Y272.

The protein belongs to the NAD(P)-dependent epimerase/dehydratase family. HldD subfamily. Homopentamer. NADP(+) serves as cofactor.

The enzyme catalyses ADP-D-glycero-beta-D-manno-heptose = ADP-L-glycero-beta-D-manno-heptose. The protein operates within nucleotide-sugar biosynthesis; ADP-L-glycero-beta-D-manno-heptose biosynthesis; ADP-L-glycero-beta-D-manno-heptose from D-glycero-beta-D-manno-heptose 7-phosphate: step 4/4. Catalyzes the interconversion between ADP-D-glycero-beta-D-manno-heptose and ADP-L-glycero-beta-D-manno-heptose via an epimerization at carbon 6 of the heptose. This chain is ADP-L-glycero-D-manno-heptose-6-epimerase, found in Cronobacter sakazakii (strain ATCC BAA-894) (Enterobacter sakazakii).